The sequence spans 154 residues: Ribonuclease H (154 aa).

Positions 5-146 (EQNIVYLYCD…ADELANRGID (142 aa)) constitute an RNase H type-1 domain. Asp-14, Glu-52, Asp-74, and Asp-138 together coordinate Mg(2+).

It belongs to the RNase H family. As to quaternary structure, monomer. The cofactor is Mg(2+).

It is found in the cytoplasm. The catalysed reaction is Endonucleolytic cleavage to 5'-phosphomonoester.. Endonuclease that specifically degrades the RNA of RNA-DNA hybrids. The chain is Ribonuclease H from Coxiella burnetii (strain CbuK_Q154) (Coxiella burnetii (strain Q154)).